A 692-amino-acid chain; its full sequence is MKLLILAVAISLAVLASGSYVPSTKFEAKYADKEFLFKQKFFFEVLRNIHLPLKYDEYIPYTKTWVSDETKYNDFAQVAEFFDYYKTGAFLEKGELFSIYNEQYLRQTYAVFTFLYNSADWDTYYKNMIWARDNINEGMFIYVLHLTVMHRPDLQGIVLPAIYEIYPYYFFNTDVIRTINYKKLYDPKFGFYGNGKYNVVYANYTATYPMDYYNNFYTEEYLNYYTEDIGLNACYYYFMMDYSFLLGGDKFGLIKDRRGELYWYMHQMLLARYNLERMSNYMGTVKPLVWRFPLKTGYFSLLSYWNGVPFKSRDYNYMISDESYFKLDWINAWEAKIRKIIEDGFFVKEDGTRINLRLPESVEFFGNLLNSNVDSVDANYVGYIEVFSRLLLSGNDFNAYKVWPSALMQFETSLRDPVFYQLYERFMDLYYYFKRFLPSYTYEELNFNGVVIKDVTFDKLMTYFDYFDSDVSNVLPMQSTDKYFDYAVFARQRRLNHKPFSYTMNVMSDYTGKAIIRAFVGPKFDRFFDLQFYKKYFFEIDQYLVDFTAGKNTFVRNSRDFYWSVKDRTMYTDLYKKIMLGYNGQEKFALDMSEAHCGFPDRLILPKGWTSGMPMQFYFIITPYTAKTYEQGYQYDKTFTCGVESGMRFYDSLPFGYPFDRVINFNYFYTKNMYFKDVFIFHTEEMKMNQRY.

Positions 1-18 are cleaved as a signal peptide; the sequence is MKLLILAVAISLAVLASG. Asn203 carries N-linked (GlcNAc...) asparagine glycosylation.

The protein belongs to the hemocyanin family. Homohexamer. Larval fat body.

The protein resides in the secreted. It localises to the extracellular space. In terms of biological role, larval storage protein (LSP) which may serve as a store of amino acids for synthesis of adult proteins. This chain is Hexamerin-1.1 (HexA), found in Anopheles gambiae (African malaria mosquito).